Here is a 297-residue protein sequence, read N- to C-terminus: uncharacterized protein (297 aa).

Positions 1–29 (MAESKAKNMFQKLSLTPKRNHEHDAGRNI) are disordered. Residues 19–29 (RNHEHDAGRNI) show a composition bias toward basic and acidic residues.

This is an uncharacterized protein from Caenorhabditis elegans.